Reading from the N-terminus, the 172-residue chain is MSFVPPATEVLIVADCWQAESEAEAVVLRAIEAAAAMVDAETADAELAVMLSDDAGVRTLNANWRGLDKPTNVLSFPALQPSATMPDDAPRMLGDIAIAYETTRREADDEGKPFDHHLSHLAVHGFLHLVGYDHETESEAEAMEQLERRILAQLGVPDPYADQDRADQDRVN.

3 residues coordinate Zn(2+): His124, His128, and His134.

It belongs to the endoribonuclease YbeY family. Zn(2+) serves as cofactor.

It localises to the cytoplasm. Functionally, single strand-specific metallo-endoribonuclease involved in late-stage 70S ribosome quality control and in maturation of the 3' terminus of the 16S rRNA. The sequence is that of Endoribonuclease YbeY from Rhodopseudomonas palustris (strain BisA53).